A 480-amino-acid polypeptide reads, in one-letter code: Glutamate--tRNA ligase (480 aa).

Positions 9–19 (PSPTGDPHVGT) match the 'HIGH' region motif. The 'KMSKS' region motif lies at 253-257 (KISKR). Lys256 lines the ATP pocket.

The protein belongs to the class-I aminoacyl-tRNA synthetase family. Glutamate--tRNA ligase type 1 subfamily. Monomer.

It is found in the cytoplasm. The enzyme catalyses tRNA(Glu) + L-glutamate + ATP = L-glutamyl-tRNA(Glu) + AMP + diphosphate. Catalyzes the attachment of glutamate to tRNA(Glu) in a two-step reaction: glutamate is first activated by ATP to form Glu-AMP and then transferred to the acceptor end of tRNA(Glu). The sequence is that of Glutamate--tRNA ligase from Deinococcus geothermalis (strain DSM 11300 / CIP 105573 / AG-3a).